The following is a 234-amino-acid chain: C2H2-type zinc-finger transcription factor clz7 (234 aa).

Disordered regions lie at residues 45 to 99 (RPEG…SRVD) and 118 to 154 (SAQPDFEDWGDLGDLMPEVLPESSGTSSGAATDNGTA). Composition is skewed to low complexity over residues 66 to 77 (SQSSNTSPTSES) and 140 to 154 (SSGTSSGAATDNGTA). Residues 159 to 184 (NRCWDHGCNGKKFLNHSNLVRHRREN) form a C2H2-type 1; degenerate zinc finger. The C2H2-type 2; degenerate zinc finger occupies 191–223 (FICPMCGAYFSRSTARNQHLEKKSCNRVRRYSN).

This sequence belongs to the GLI C2H2-type zinc-finger protein family.

Its subcellular location is the nucleus. Functionally, transcription factor that probably regulates the expression of the gene cluster that mediates the biosynthesis of squalestatin S1 (SQS1, also known as zaragozic acid A), a heavily oxidized fungal polyketide that offers potent cholesterol lowering activity by targeting squalene synthase (SS). In Cochliobolus lunatus (Filamentous fungus), this protein is C2H2-type zinc-finger transcription factor clz7.